The sequence spans 586 residues: Phosphatidylinositol-3-phosphatase SAC1-B (586 aa).

At Met-1–Lys-519 the chain is on the cytoplasmic side. The SAC domain occupies Leu-121–Gly-450. Positions Thr-451 to Asp-586 are essential for phosphatidylinositol-4-phosphate phosphatase activity. Residues Phe-520–Met-540 form a helical membrane-spanning segment. The Lumenal portion of the chain corresponds to Ala-541–Glu-547. A helical membrane pass occupies residues Thr-548–Phe-568. The Cytoplasmic segment spans residues Asn-569–Asp-586.

Its subcellular location is the endoplasmic reticulum membrane. The protein localises to the golgi apparatus membrane. It catalyses the reaction a 1,2-diacyl-sn-glycero-3-phospho-(1D-myo-inositol-3-phosphate) + H2O = a 1,2-diacyl-sn-glycero-3-phospho-(1D-myo-inositol) + phosphate. The catalysed reaction is a 1,2-diacyl-sn-glycero-3-phospho-(1D-myo-inositol 4-phosphate) + H2O = a 1,2-diacyl-sn-glycero-3-phospho-(1D-myo-inositol) + phosphate. In terms of biological role, phosphoinositide phosphatase which catalyzes the hydrolysis of phosphatidylinositol 4-phosphate (PtdIns(4)P), phosphatidylinositol 3-phosphate (PtdIns(3)P) and has low activity towards phosphatidylinositol-3,5-bisphosphate (PtdIns(3,5)P2). This chain is Phosphatidylinositol-3-phosphatase SAC1-B (sacm1lb), found in Danio rerio (Zebrafish).